A 73-amino-acid chain; its full sequence is DNA-directed RNA polymerase subunit omega (73 aa).

Belongs to the RNA polymerase subunit omega family. As to quaternary structure, the RNAP catalytic core consists of 2 alpha, 1 beta, 1 beta' and 1 omega subunit. When a sigma factor is associated with the core the holoenzyme is formed, which can initiate transcription.

It carries out the reaction RNA(n) + a ribonucleoside 5'-triphosphate = RNA(n+1) + diphosphate. Its function is as follows. Promotes RNA polymerase assembly. Latches the N- and C-terminal regions of the beta' subunit thereby facilitating its interaction with the beta and alpha subunits. The chain is DNA-directed RNA polymerase subunit omega from Oleidesulfovibrio alaskensis (strain ATCC BAA-1058 / DSM 17464 / G20) (Desulfovibrio alaskensis).